The chain runs to 565 residues: Putative lipase ATG15 (565 aa).

Residues 1–21 (MISNDYTKFSSKRRSLRYSNR) lie on the Cytoplasmic side of the membrane. A helical; Signal-anchor for type II membrane protein membrane pass occupies residues 22 to 42 (ILLLMGTILLIVVYFYSDILV). Residues 43-565 (DKSIIMFRNE…EYTTFTKRLI (523 aa)) are Lumenal-facing. Asn-217 is a glycosylation site (N-linked (GlcNAc...) asparagine). Ser-347 (charge relay system) is an active-site residue. The tract at residues 488 to 538 (KKPKKQTTSSSSEKVDTSTTKSIDRTTITTRTNEKKWHPNPKDPSTTTTDD) is disordered. Residues 493–518 (QTTSSSSEKVDTSTTKSIDRTTITTR) show a composition bias toward low complexity. Residues 519–528 (TNEKKWHPNP) show a composition bias toward basic and acidic residues.

It belongs to the AB hydrolase superfamily. Lipase family. Binds to both phosphatidylinositol (PI) and phosphatidylinositol 3,5-bisphosphate (PIP2).

It is found in the endosome. It localises to the multivesicular body membrane. The protein localises to the prevacuolar compartment membrane. The enzyme catalyses a triacylglycerol + H2O = a diacylglycerol + a fatty acid + H(+). Functionally, lipase which is essential for lysis of subvacuolar cytoplasm to vacuole targeted bodies and intravacuolar autophagic bodies. Involved in the lysis of intravacuolar multivesicular body (MVB) vesicles. The intravacuolar membrane disintegration by ATG15 is critical to life span extension. In Vanderwaltozyma polyspora (strain ATCC 22028 / DSM 70294 / BCRC 21397 / CBS 2163 / NBRC 10782 / NRRL Y-8283 / UCD 57-17) (Kluyveromyces polysporus), this protein is Putative lipase ATG15 (ATG15).